We begin with the raw amino-acid sequence, 82 residues long: Translational regulator CsrA (82 aa).

It belongs to the CsrA/RsmA family. Homodimer; the beta-strands of each monomer intercalate to form a hydrophobic core, while the alpha-helices form wings that extend away from the core.

The protein resides in the cytoplasm. Functionally, a translational regulator that binds mRNA to regulate translation initiation and/or mRNA stability. Usually binds in the 5'-UTR at or near the Shine-Dalgarno sequence preventing ribosome-binding, thus repressing translation. Its main target seems to be the major flagellin gene, while its function is anatagonized by FliW. This Brachyspira hyodysenteriae (strain ATCC 49526 / WA1) protein is Translational regulator CsrA.